The primary structure comprises 216 residues: ATP phosphoribosyltransferase (216 aa).

This sequence belongs to the ATP phosphoribosyltransferase family. Short subfamily. In terms of assembly, heteromultimer composed of HisG and HisZ subunits.

The protein localises to the cytoplasm. The enzyme catalyses 1-(5-phospho-beta-D-ribosyl)-ATP + diphosphate = 5-phospho-alpha-D-ribose 1-diphosphate + ATP. It functions in the pathway amino-acid biosynthesis; L-histidine biosynthesis; L-histidine from 5-phospho-alpha-D-ribose 1-diphosphate: step 1/9. Functionally, catalyzes the condensation of ATP and 5-phosphoribose 1-diphosphate to form N'-(5'-phosphoribosyl)-ATP (PR-ATP). Has a crucial role in the pathway because the rate of histidine biosynthesis seems to be controlled primarily by regulation of HisG enzymatic activity. The polypeptide is ATP phosphoribosyltransferase (Nitrosomonas europaea (strain ATCC 19718 / CIP 103999 / KCTC 2705 / NBRC 14298)).